The sequence spans 342 residues: L-threonine 3-dehydrogenase (342 aa).

C38 lines the Zn(2+) pocket. Residues T40 and H43 each act as charge relay system in the active site. The Zn(2+) site is built by H63, E64, C93, C96, C99, and C107. NAD(+) contacts are provided by residues I175, D195, R200, 262-264, and 286-287; these read LGI and IY.

Belongs to the zinc-containing alcohol dehydrogenase family. Homotetramer. It depends on Zn(2+) as a cofactor.

It is found in the cytoplasm. It catalyses the reaction L-threonine + NAD(+) = (2S)-2-amino-3-oxobutanoate + NADH + H(+). The protein operates within amino-acid degradation; L-threonine degradation via oxydo-reductase pathway; glycine from L-threonine: step 1/2. Functionally, catalyzes the NAD(+)-dependent oxidation of L-threonine to 2-amino-3-ketobutyrate. In Burkholderia vietnamiensis (strain G4 / LMG 22486) (Burkholderia cepacia (strain R1808)), this protein is L-threonine 3-dehydrogenase.